Here is a 161-residue protein sequence, read N- to C-terminus: Transcriptional repressor NrdR (161 aa).

The segment covering 1 to 11 (MRCPSCSSLDT) has biased composition (polar residues). The tract at residues 1-20 (MRCPSCSSLDTQVKDSRPTE) is disordered. A zinc finger spans residues 3-34 (CPSCSSLDTQVKDSRPTEDSAVIRRRRVCMAC). One can recognise an ATP-cone domain in the interval 49–139 (LTVIKRNGRR…VYRNFREAKD (91 aa)).

Belongs to the NrdR family. The cofactor is Zn(2+).

Functionally, negatively regulates transcription of bacterial ribonucleotide reductase nrd genes and operons by binding to NrdR-boxes. The protein is Transcriptional repressor NrdR of Rhodopseudomonas palustris (strain BisB18).